We begin with the raw amino-acid sequence, 245 residues long: 8-amino-3,8-dideoxy-manno-octulosonate cytidylyltransferase (245 aa).

This sequence belongs to the KdsB family.

The protein localises to the cytoplasm. It catalyses the reaction 8-amino-3,8-dideoxy-alpha-D-manno-octulosonate + CTP = CMP-8-amino-3,8-dideoxy-alpha-D-manno-oct-2-ulosonate + diphosphate. It functions in the pathway bacterial outer membrane biogenesis; lipopolysaccharide biosynthesis. Functionally, activates KDO8N (a required 8-carbon sugar) for incorporation into bacterial lipopolysaccharide in the Shewanella genus. This is 8-amino-3,8-dideoxy-manno-octulosonate cytidylyltransferase from Shewanella baltica (strain OS223).